The sequence spans 278 residues: Release factor glutamine methyltransferase (278 aa).

S-adenosyl-L-methionine is bound by residues 116–120, aspartate 139, tryptophan 168, and asparagine 182; that span reads GTGTG. 182-185 is a binding site for substrate; the sequence is NPPY.

This sequence belongs to the protein N5-glutamine methyltransferase family. PrmC subfamily.

It catalyses the reaction L-glutaminyl-[peptide chain release factor] + S-adenosyl-L-methionine = N(5)-methyl-L-glutaminyl-[peptide chain release factor] + S-adenosyl-L-homocysteine + H(+). Methylates the class 1 translation termination release factors RF1/PrfA and RF2/PrfB on the glutamine residue of the universally conserved GGQ motif. In Cereibacter sphaeroides (strain ATCC 17023 / DSM 158 / JCM 6121 / CCUG 31486 / LMG 2827 / NBRC 12203 / NCIMB 8253 / ATH 2.4.1.) (Rhodobacter sphaeroides), this protein is Release factor glutamine methyltransferase.